Reading from the N-terminus, the 250-residue chain is 2,3-bisphosphoglycerate-dependent phosphoglycerate mutase (250 aa).

Substrate-binding positions include 10 to 17 (RHGESQWN), 23 to 24 (TG), Arg62, 89 to 92 (ERHY), Lys100, 116 to 117 (RR), and 185 to 186 (GN). Catalysis depends on His11, which acts as the Tele-phosphohistidine intermediate. Residue Glu89 is the Proton donor/acceptor of the active site.

It belongs to the phosphoglycerate mutase family. BPG-dependent PGAM subfamily. In terms of assembly, homodimer.

It catalyses the reaction (2R)-2-phosphoglycerate = (2R)-3-phosphoglycerate. The protein operates within carbohydrate degradation; glycolysis; pyruvate from D-glyceraldehyde 3-phosphate: step 3/5. Its function is as follows. Catalyzes the interconversion of 2-phosphoglycerate and 3-phosphoglycerate. The sequence is that of 2,3-bisphosphoglycerate-dependent phosphoglycerate mutase from Shigella dysenteriae serotype 1 (strain Sd197).